The following is a 1521-amino-acid chain: Suppressor of Ty 6 homolog (1521 aa).

The interval 1-238 (MDFIDNQAEE…EEIIEDDGEG (238 aa)) is disordered. A compositionally biased stretch (basic residues) spans 26-41 (KKMKMAKEKSKRKKKM). The Nuclear localization signal motif lies at 26–42 (KKMKMAKEKSKRKKKMV). Composition is skewed to acidic residues over residues 45–56 (SDEDEDDDDDEE) and 67–76 (ADDDDEEEDA). Residues 77–89 (KSEKSEKSRHSGE) show a composition bias toward basic and acidic residues. Over residues 90–99 (DELDDEDLDL) the composition is skewed to acidic residues. Over residues 126-157 (PIRRPNHEDDDLLSERGSDDGDRRKDRGRGDR) the composition is skewed to basic and acidic residues. Composition is skewed to acidic residues over residues 166–176 (RSEDDFIEDDG), 191–200 (NLPEGAEDDA), and 209–238 (FNLDEFYDDDDGEDGLEDEEEEIIEDDGEG). One can recognise an S1 motif domain in the interval 1183–1252 (LGDSRQGGCP…ERFSLFLSCK (70 aa)). In terms of domain architecture, SH2 spans 1300–1389 (HPNFHNVSYE…IARFVQPMIQ (90 aa)).

Belongs to the SPT6 family. Interacts with glp-1 and lin-12. Abundant in embryos, and less abundant in larvae.

It is found in the nucleus. Histone H3-H4 chaperone that plays a role in maintenance of chromatin structure during RNA polymerase II transcription elongation. Required for several aspects of morphogenesis of C.elegans, including regulation of division in the germline and gut and specification of ventral-uterine precursor cell fate. The sequence is that of Suppressor of Ty 6 homolog (emb-5) from Caenorhabditis elegans.